The sequence spans 788 residues: MESVDTELTSFNNMVAKSSYPVRILHHNNGISEDEEGGSGVEPYVGLEFDTAEEAREFYNAYAARTGFKVRTGQLYRSRTDGTVSSRRFVCSKEGFQLNSRTGCTAFIRVQRRDTGKWVLDQIQKEHNHELGGEGSVEETTPRPSRAPAPTKLGVTVNPHRPKMKVVDESDRETRSCPGGFKRFKGGGGEGEVSDDHHQTQQAKAVTGTEPYAGLEFGSANEACQFYQAYAEVVGFRVRIGQLFRSKVDGSITSRRFVCSREGFQHPSRMGCGAYMRIKRQDSGGWIVDRLNKDHNHDLEPGKKNDAGMKKIPDDGTGGLDSVDLIELNDFGNNHIKKTRENRIGKEWYPLLLDYFQSRQTEDMGFFYAVELDVNNGSCMSIFWADSRARFACSQFGDSVVFDTSYRKGSYSVPFATIIGFNHHRQPVLLGCAMVADESKEAFLWLFQTWLRAMSGRRPRSIVADQDLPIQQALVQVFPGAHHRYSAWQIREKERENLIPFPSEFKYEYEKCIYQTQTIVEFDSVWSALINKYGLRDDVWLREIYEQRENWVPAYLRASFFAGIPINGTIEPFFGASLDALTPLREFISRYEQALEQRREEERKEDFNSYNLQPFLQTKEPVEEQCRRLYTLTVFRIFQNELVQSYNYLCLKTYEEGAISRFLVRKCGNESEKHAVTFSASNLNSSCSCQMFEHEGLLCRHILKVFNLLDIRELPSRYILHRWTKNAEFGFVRDMESGVSAQDLKALMVWSLREAASKYIEFGTSSLEKYKLAYEIMREGGKKLCWQR.

In terms of domain architecture, FAR1 1 spans 57–133 (EFYNAYAART…QKEHNHELGG (77 aa)). Residues 127-200 (HNHELGGEGS…GEVSDDHHQT (74 aa)) are disordered. A compositionally biased stretch (low complexity) spans 142–151 (PRPSRAPAPT). Over residues 165-175 (KVVDESDRETR) the composition is skewed to basic and acidic residues. An FAR1 2 domain is found at 225–301 (QFYQAYAEVV…NKDHNHDLEP (77 aa)). An MULE domain is found at 399–495 (SVVFDTSYRK…SAWQIREKER (97 aa)). Residues 674 to 710 (HAVTFSASNLNSSCSCQMFEHEGLLCRHILKVFNLLD) form an SWIM-type zinc finger.

The protein belongs to the FHY3/FAR1 family. In terms of tissue distribution, expressed in hypocotyls, rosette and cauline leaves, inflorescences stems, flowers and siliques.

It localises to the nucleus. Putative transcription activator involved in regulating light control of development. The protein is Protein FAR1-RELATED SEQUENCE 12 (FRS12) of Arabidopsis thaliana (Mouse-ear cress).